The sequence spans 333 residues: 1D-myo-inositol 2-acetamido-2-deoxy-alpha-D-glucopyranoside deacetylase (333 aa).

Zn(2+) contacts are provided by H18, D21, and H165.

This sequence belongs to the MshB deacetylase family. The cofactor is Zn(2+).

It catalyses the reaction 1D-myo-inositol 2-acetamido-2-deoxy-alpha-D-glucopyranoside + H2O = 1D-myo-inositol 2-amino-2-deoxy-alpha-D-glucopyranoside + acetate. Catalyzes the deacetylation of 1D-myo-inositol 2-acetamido-2-deoxy-alpha-D-glucopyranoside (GlcNAc-Ins) in the mycothiol biosynthesis pathway. The protein is 1D-myo-inositol 2-acetamido-2-deoxy-alpha-D-glucopyranoside deacetylase of Corynebacterium jeikeium (strain K411).